A 546-amino-acid polypeptide reads, in one-letter code: Chaperonin GroEL (546 aa).

ATP-binding positions include 30-33 (TLGP), Lys51, 87-91 (DGTTT), Gly415, 479-481 (NAA), and Asp495.

It belongs to the chaperonin (HSP60) family. In terms of assembly, forms a cylinder of 14 subunits composed of two heptameric rings stacked back-to-back. Interacts with the co-chaperonin GroES.

It is found in the cytoplasm. It carries out the reaction ATP + H2O + a folded polypeptide = ADP + phosphate + an unfolded polypeptide.. Together with its co-chaperonin GroES, plays an essential role in assisting protein folding. The GroEL-GroES system forms a nano-cage that allows encapsulation of the non-native substrate proteins and provides a physical environment optimized to promote and accelerate protein folding. This Azotobacter vinelandii protein is Chaperonin GroEL.